A 472-amino-acid chain; its full sequence is MRFLFFLFVAVVHLFSLGSGKAIYKSGVSQRTFQEIKEEIANYEDVAKAIINLAVYGKYQNRSYERLGLLVDTVGPRLSGSKNLEKAIQIMYQNLQQDGLENVHLEQVRIPHWERGEESAVMVVPRIHKLAILGLGGSIGTPPEGITAEVLVVASFVELQRRASEARGKIVVYNQPYTDYGKTVQYRERGAVEAAKVGAVASLIRSVASFSIYSPHTGHQGYQDGVPKIPTACITIEDAEMMSRMASRGDKIVIHLKMGAKTYPDTDSFNTVAEITGSKYPEEVVLVSGHLDSWDVGQGALDDGGGAFISWEALSLVKDLGLRPKRTLRLVLWTAEEQGGVGASQYYELHKANISKYSLVMEADSGTFLPTGLQFTGSDKARAIMKEVMSLLQPLNITKVFNDAEGTDINFWIQAGVPGASLRDDLYKYFFFHHSHGDTMTAMDPKQMNVAAAVWAVVAYVVADMEEMLPRS.

The N-terminal stretch at 1–20 is a signal peptide; the sequence is MRFLFFLFVAVVHLFSLGSG. Positions 21–44 are excised as a propeptide; it reads KAIYKSGVSQRTFQEIKEEIANYE. Asn61 carries an N-linked (GlcNAc...) asparagine glycan. Residues His290 and Asp302 each coordinate Zn(2+). The active-site Nucleophile is the Glu336. Glu337 provides a ligand contact to Zn(2+). An N-linked (GlcNAc...) asparagine glycan is attached at Asn353. Asp364 contacts Zn(2+). Asn396 is a glycosylation site (N-linked (GlcNAc...) asparagine). Position 434 (His434) interacts with Zn(2+).

This sequence belongs to the peptidase M28 family. In terms of assembly, homodimer. The monomeric form is inactive while the homodimer is active. Post-translationally, N-glycosylated. The secreted form is modified by hybrid or complex type oligosaccharide chains.

The protein localises to the endoplasmic reticulum. It localises to the golgi apparatus. It is found in the lysosome. Its subcellular location is the secreted. In terms of biological role, carboxypeptidase that may play an important role in the hydrolysis of circulating peptides. Catalyzes the hydrolysis of dipeptides with unsubstituted terminals into amino acids. May play a role in the liberation of thyroxine hormone from its thyroglobulin (Tg) precursor. This chain is Carboxypeptidase Q (Cpq), found in Rattus norvegicus (Rat).